We begin with the raw amino-acid sequence, 209 residues long: V-type ATP synthase subunit D (209 aa).

This sequence belongs to the V-ATPase D subunit family.

Produces ATP from ADP in the presence of a proton gradient across the membrane. In Anaeromyxobacter sp. (strain K), this protein is V-type ATP synthase subunit D.